Consider the following 196-residue polypeptide: Serine recombinase PinR (196 aa).

A Resolvase/invertase-type recombinase catalytic domain is found at 3–143 (RIFAYCRIST…SGIVRARGAG (141 aa)). Serine 11 (O-(5'-phospho-DNA)-serine intermediate) is an active-site residue.

It belongs to the site-specific recombinase resolvase family.

The polypeptide is Serine recombinase PinR (pinR) (Escherichia coli (strain K12)).